A 796-amino-acid polypeptide reads, in one-letter code: Cation/H(+) antiporter 6B (796 aa).

13 helical membrane-spanning segments follow: residues 54-74 (DFWE…FLLW), 93-113 (SMML…IPCL), 131-151 (IGAF…DVGI), 159-179 (SVVI…LLYS), 194-213 (YTVM…NMLL), 223-243 (FGQI…FLTV), 259-279 (LAFM…LWVI), 285-305 (GAPV…LSYL), 310-330 (FLFF…NGPP), 344-364 (EGIF…WSFL), 382-402 (FSFL…AALA), 411-431 (IILG…VLTA), and 444-464 (LLGV…HFLY).

The protein belongs to the monovalent cation:proton antiporter 2 (CPA2) transporter (TC 2.A.37) family. CHX (TC 2.A.37.4) subfamily. As to expression, preferentially expressed in pollen.

It localises to the membrane. Its function is as follows. May operate as a cation/H(+) antiporter. This Arabidopsis thaliana (Mouse-ear cress) protein is Cation/H(+) antiporter 6B (CHX6b).